The chain runs to 289 residues: ATP synthase gamma chain (289 aa).

The protein belongs to the ATPase gamma chain family. As to quaternary structure, F-type ATPases have 2 components, CF(1) - the catalytic core - and CF(0) - the membrane proton channel. CF(1) has five subunits: alpha(3), beta(3), gamma(1), delta(1), epsilon(1). CF(0) has three main subunits: a, b and c.

It localises to the cell inner membrane. Functionally, produces ATP from ADP in the presence of a proton gradient across the membrane. The gamma chain is believed to be important in regulating ATPase activity and the flow of protons through the CF(0) complex. This chain is ATP synthase gamma chain, found in Azorhizobium caulinodans (strain ATCC 43989 / DSM 5975 / JCM 20966 / LMG 6465 / NBRC 14845 / NCIMB 13405 / ORS 571).